We begin with the raw amino-acid sequence, 880 residues long: Leucine--tRNA ligase (880 aa).

The 'HIGH' region signature appears at 46–56 (PYPSGALHMGH). A 'KMSKS' region motif is present at residues 638-642 (KMSKS). Lys-641 is a binding site for ATP.

The protein belongs to the class-I aminoacyl-tRNA synthetase family.

The protein resides in the cytoplasm. It carries out the reaction tRNA(Leu) + L-leucine + ATP = L-leucyl-tRNA(Leu) + AMP + diphosphate. This chain is Leucine--tRNA ligase, found in Xanthomonas oryzae pv. oryzae (strain MAFF 311018).